The sequence spans 364 residues: MGAKKHTLQVLPWLLLFAQHTAASACDCANTTDGADRQGAMKLKLIAIASILAAGAAGVLVPVIGRSMAALRPDGDIFFAVKAFAAGVILATGMVHILPAAFDALTSPCLKRGGGDRNPFPFAGLVSMSAAVSTMVVDSLAAGYYHRSQFRKARPVDNINVHKHAGDERAEHAQHINAHTHGGHTHSHGDIVVCGSPEEGSVAESIRHKVVSQVLELGILVHSVIIGVSLGASVRPSTIRPLVGALSFHQFFEGVGLGGCIVQANFKVRATVIMAIFFSLTAPVGIVLGIAISSSYNVHSSTAFVVEGVFNSASAGILIYMSLVDLLATDFNNPKLQINTKLQLMAYLALFLGAGLMSMLAIWA.

The first 23 residues, 1–23 (MGAKKHTLQVLPWLLLFAQHTAA), serve as a signal peptide directing secretion. At 24-44 (SACDCANTTDGADRQGAMKLK) the chain is on the extracellular side. A glycan (N-linked (GlcNAc...) asparagine) is linked at asparagine 30. Residues 45 to 65 (LIAIASILAAGAAGVLVPVIG) form a helical membrane-spanning segment. Residues 66–76 (RSMAALRPDGD) lie on the Cytoplasmic side of the membrane. Residues 77–97 (IFFAVKAFAAGVILATGMVHI) traverse the membrane as a helical segment. Over 98-119 (LPAAFDALTSPCLKRGGGDRNP) the chain is Extracellular. Residues 120-140 (FPFAGLVSMSAAVSTMVVDSL) form a helical membrane-spanning segment. At 141–213 (AAGYYHRSQF…ESIRHKVVSQ (73 aa)) the chain is on the cytoplasmic side. The helical transmembrane segment at 214–234 (VLELGILVHSVIIGVSLGASV) threads the bilayer. The Extracellular portion of the chain corresponds to 235–241 (RPSTIRP). A helical transmembrane segment spans residues 242 to 262 (LVGALSFHQFFEGVGLGGCIV). The Cytoplasmic portion of the chain corresponds to 263–271 (QANFKVRAT). A helical membrane pass occupies residues 272-292 (VIMAIFFSLTAPVGIVLGIAI). The Extracellular segment spans residues 293–303 (SSSYNVHSSTA). The helical transmembrane segment at 304 to 324 (FVVEGVFNSASAGILIYMSLV) threads the bilayer. Over 325-343 (DLLATDFNNPKLQINTKLQ) the chain is Cytoplasmic. The chain crosses the membrane as a helical span at residues 344 to 364 (LMAYLALFLGAGLMSMLAIWA).

The protein belongs to the ZIP transporter (TC 2.A.5) family. In terms of tissue distribution, expressed in vascular bundles of stems.

Its subcellular location is the cell membrane. Zinc transporter that may mediate zinc uptake from the rhizosphere. Seems specific to zinc ions and may not transport other divalent cations. This chain is Zinc transporter 3 (ZIP3), found in Oryza sativa subsp. japonica (Rice).